Here is a 133-residue protein sequence, read N- to C-terminus: Sigma factor-binding protein Crl (133 aa).

Positions 99-122 are essential for activity; it reads TLDDFYVKLTKFVKEDCQLDLQAS.

The protein belongs to the Crl family.

Its subcellular location is the cytoplasm. Binds to the sigma-S subunit of RNA polymerase, activating expression of sigma-S-regulated genes. Stimulates RNA polymerase holoenzyme formation and may bind to several other sigma factors, such as sigma-70 and sigma-32. This chain is Sigma factor-binding protein Crl, found in Photobacterium profundum (strain SS9).